Consider the following 322-residue polypeptide: Porphobilinogen deaminase (322 aa).

Cys254 carries the S-(dipyrrolylmethanemethyl)cysteine modification.

Belongs to the HMBS family. As to quaternary structure, monomer. Requires dipyrromethane as cofactor.

It catalyses the reaction 4 porphobilinogen + H2O = hydroxymethylbilane + 4 NH4(+). The protein operates within porphyrin-containing compound metabolism; protoporphyrin-IX biosynthesis; coproporphyrinogen-III from 5-aminolevulinate: step 2/4. Functionally, tetrapolymerization of the monopyrrole PBG into the hydroxymethylbilane pre-uroporphyrinogen in several discrete steps. This Methylococcus capsulatus (strain ATCC 33009 / NCIMB 11132 / Bath) protein is Porphobilinogen deaminase.